Here is a 454-residue protein sequence, read N- to C-terminus: MALNVVILAAGKGTRMRSDLPKVLHPIAHKSMVQHVIDTAHSIGSDAIQLVYGYGADKLKSTLGEQKLNWILQAEQLGTGHAVAQAIPNIDDNDTVLILYGDVPLIQASTLEALLAARPEYGVAILTVNLANPMGYGRIVREQGKVVGIVEQKDANPEQLAINEVNTGIMAVPGNALKTWLDRLSNNNAQGEYYLTDIIAMAHADGVEINTAQPQSAIEVEGANNRVQLAQLERAYQAREAEKLMIAGANLRDPSRIDIRGEVTVGMDVMIDVNVIFEGKVVIGNNVTIGAGAIIIDTEIADNAEIKPYSIIEGAKLGVAASAGPFARLRPGAELMQDAHIGNFVEMKKAVLGVGSKAGHLAYLGDAQIGAGVNIGAGTITCNYDGANKHLTVIEDNVFVGSDTQLVAPVTIGKGATLGAGSTITRDVGEDELVITRVKQKHLTGWQRPVKIKK.

Positions 1–226 (MALNVVILAA…AIEVEGANNR (226 aa)) are pyrophosphorylase. Residues 8 to 11 (LAAG), Lys22, Gln73, 78 to 79 (GT), 100 to 102 (YGD), Gly137, Glu151, Asn166, and Asn224 contribute to the UDP-N-acetyl-alpha-D-glucosamine site. Asp102 contacts Mg(2+). Residue Asn224 coordinates Mg(2+). Residues 227–247 (VQLAQLERAYQAREAEKLMIA) are linker. The N-acetyltransferase stretch occupies residues 248 to 454 (GANLRDPSRI…GWQRPVKIKK (207 aa)). UDP-N-acetyl-alpha-D-glucosamine-binding residues include Arg330 and Lys348. The active-site Proton acceptor is His360. Residues Tyr363 and Asn374 each coordinate UDP-N-acetyl-alpha-D-glucosamine. Acetyl-CoA-binding positions include Ala377, 383-384 (NY), Ser402, Ala420, and Arg437.

This sequence in the N-terminal section; belongs to the N-acetylglucosamine-1-phosphate uridyltransferase family. It in the C-terminal section; belongs to the transferase hexapeptide repeat family. As to quaternary structure, homotrimer. Requires Mg(2+) as cofactor.

It is found in the cytoplasm. It catalyses the reaction alpha-D-glucosamine 1-phosphate + acetyl-CoA = N-acetyl-alpha-D-glucosamine 1-phosphate + CoA + H(+). The catalysed reaction is N-acetyl-alpha-D-glucosamine 1-phosphate + UTP + H(+) = UDP-N-acetyl-alpha-D-glucosamine + diphosphate. It participates in nucleotide-sugar biosynthesis; UDP-N-acetyl-alpha-D-glucosamine biosynthesis; N-acetyl-alpha-D-glucosamine 1-phosphate from alpha-D-glucosamine 6-phosphate (route II): step 2/2. The protein operates within nucleotide-sugar biosynthesis; UDP-N-acetyl-alpha-D-glucosamine biosynthesis; UDP-N-acetyl-alpha-D-glucosamine from N-acetyl-alpha-D-glucosamine 1-phosphate: step 1/1. It functions in the pathway bacterial outer membrane biogenesis; LPS lipid A biosynthesis. Its function is as follows. Catalyzes the last two sequential reactions in the de novo biosynthetic pathway for UDP-N-acetylglucosamine (UDP-GlcNAc). The C-terminal domain catalyzes the transfer of acetyl group from acetyl coenzyme A to glucosamine-1-phosphate (GlcN-1-P) to produce N-acetylglucosamine-1-phosphate (GlcNAc-1-P), which is converted into UDP-GlcNAc by the transfer of uridine 5-monophosphate (from uridine 5-triphosphate), a reaction catalyzed by the N-terminal domain. The polypeptide is Bifunctional protein GlmU (Shewanella oneidensis (strain ATCC 700550 / JCM 31522 / CIP 106686 / LMG 19005 / NCIMB 14063 / MR-1)).